Consider the following 569-residue polypeptide: Sulfite reductase [NADPH] hemoprotein beta-component (569 aa).

Residues Cys-434, Cys-440, Cys-479, and Cys-483 each contribute to the [4Fe-4S] cluster site. Siroheme is bound at residue Cys-483.

The protein belongs to the nitrite and sulfite reductase 4Fe-4S domain family. As to quaternary structure, alpha(8)-beta(8). The alpha component is a flavoprotein, the beta component is a hemoprotein. Siroheme is required as a cofactor. [4Fe-4S] cluster serves as cofactor.

The catalysed reaction is hydrogen sulfide + 3 NADP(+) + 3 H2O = sulfite + 3 NADPH + 4 H(+). Its pathway is sulfur metabolism; hydrogen sulfide biosynthesis; hydrogen sulfide from sulfite (NADPH route): step 1/1. Its function is as follows. Component of the sulfite reductase complex that catalyzes the 6-electron reduction of sulfite to sulfide. This is one of several activities required for the biosynthesis of L-cysteine from sulfate. The sequence is that of Sulfite reductase [NADPH] hemoprotein beta-component from Staphylococcus carnosus (strain TM300).